Here is a 203-residue protein sequence, read N- to C-terminus: MIGQLSGKVDSQGDDYVIIDVNGVGYLVYASGKTLGKLAEGEFYKLFIETHVREEHIHLYGFLTLEEKIFFNLLQSVNGIGTRMALFILSSLTPSDIQIAVNNEDKNIFKAISGVGAKLAERIVLELKGKVAKISSGSAIIKESLNIKNITPVASNEVIKALVNLGFSRFEAQNAVQGIITQNPEISIDELIKTALKNRNSNF.

Residues 1 to 63 (MIGQLSGKVD…EEHIHLYGFL (63 aa)) form a domain I region. A domain II region spans residues 64 to 142 (TLEEKIFFNL…KISSGSAIIK (79 aa)). The interval 143 to 149 (ESLNIKN) is flexible linker. The segment at 150–203 (ITPVASNEVIKALVNLGFSRFEAQNAVQGIITQNPEISIDELIKTALKNRNSNF) is domain III.

The protein belongs to the RuvA family. As to quaternary structure, homotetramer. Forms an RuvA(8)-RuvB(12)-Holliday junction (HJ) complex. HJ DNA is sandwiched between 2 RuvA tetramers; dsDNA enters through RuvA and exits via RuvB. An RuvB hexamer assembles on each DNA strand where it exits the tetramer. Each RuvB hexamer is contacted by two RuvA subunits (via domain III) on 2 adjacent RuvB subunits; this complex drives branch migration. In the full resolvosome a probable DNA-RuvA(4)-RuvB(12)-RuvC(2) complex forms which resolves the HJ.

The protein resides in the cytoplasm. Functionally, the RuvA-RuvB-RuvC complex processes Holliday junction (HJ) DNA during genetic recombination and DNA repair, while the RuvA-RuvB complex plays an important role in the rescue of blocked DNA replication forks via replication fork reversal (RFR). RuvA specifically binds to HJ cruciform DNA, conferring on it an open structure. The RuvB hexamer acts as an ATP-dependent pump, pulling dsDNA into and through the RuvAB complex. HJ branch migration allows RuvC to scan DNA until it finds its consensus sequence, where it cleaves and resolves the cruciform DNA. This chain is Holliday junction branch migration complex subunit RuvA, found in Rickettsia conorii (strain ATCC VR-613 / Malish 7).